The primary structure comprises 1066 residues: Bifunctional cytochrome P450/NADPH--P450 reductase (1066 aa).

The cytochrome P450 stretch occupies residues 1–480 (MAESVPIPEP…LAGNGATSSS (480 aa)). Cysteine 407 serves as a coordination point for heme. Residues 481–1066 (THNIKAAANL…NERFATDVFD (586 aa)) are NADPH-P-450 reductase. The Flavodoxin-like domain occupies 500–641 (MAIFYGSNSG…DFEAWEDIVL (142 aa)). FMN is bound by residues 506–511 (SNSGTC), 554–557 (SYEG), cysteine 588, and threonine 596. The region spanning 676-904 (QDVEEALVVA…RASSEAFHLP (229 aa)) is the FAD-binding FR-type domain.

In the N-terminal section; belongs to the cytochrome P450 family. FAD serves as cofactor. Requires FMN as cofactor. The cofactor is heme.

The protein resides in the membrane. The catalysed reaction is an organic molecule + reduced [NADPH--hemoprotein reductase] + O2 = an alcohol + oxidized [NADPH--hemoprotein reductase] + H2O + H(+). The enzyme catalyses 2 oxidized [cytochrome P450] + NADPH = 2 reduced [cytochrome P450] + NADP(+) + H(+). With respect to regulation, stimulated NADPH--cytochrome reductase activity in the presence of substrate. Inhibited by fatty acid substrates longer than 13 carbons and the degree of inhibition increases with increasing chain length. Functionally, functions as a fatty acid monooxygenase. Catalyzes hydroxylation of fatty acids at omega-1, omega-2 and omega-3 positions. Shows activity toward fatty acids with a chain length of 9-18 carbons with optimum chain lengths of 12-14 carbons (lauric, tridecylic and myristic acids). Can also use shorter saturated fatty acids with a chain length of 9 or 10 carbons as substrates. Also displays a NADPH-dependent reductase activity in the C-terminal domain, which allows electron transfer from NADPH to the heme iron of the cytochrome P450 N-terminal domain. In Fusarium oxysporum (Fusarium vascular wilt), this protein is Bifunctional cytochrome P450/NADPH--P450 reductase.